Reading from the N-terminus, the 376-residue chain is Chaperone protein DnaJ (376 aa).

The J domain occupies aspartate 5–glycine 70. The segment at glycine 132 to aspartate 209 adopts a CR-type zinc-finger fold. Residues cysteine 145, cysteine 148, cysteine 161, cysteine 164, cysteine 183, cysteine 186, cysteine 197, and cysteine 200 each coordinate Zn(2+). CXXCXGXG motif repeat units lie at residues cysteine 145 to glycine 152, cysteine 161 to glycine 168, cysteine 183 to glycine 190, and cysteine 197 to glycine 204. The segment at glycine 223 to glycine 242 is disordered.

It belongs to the DnaJ family. In terms of assembly, homodimer. It depends on Zn(2+) as a cofactor.

Its subcellular location is the cytoplasm. Its function is as follows. Participates actively in the response to hyperosmotic and heat shock by preventing the aggregation of stress-denatured proteins and by disaggregating proteins, also in an autonomous, DnaK-independent fashion. Unfolded proteins bind initially to DnaJ; upon interaction with the DnaJ-bound protein, DnaK hydrolyzes its bound ATP, resulting in the formation of a stable complex. GrpE releases ADP from DnaK; ATP binding to DnaK triggers the release of the substrate protein, thus completing the reaction cycle. Several rounds of ATP-dependent interactions between DnaJ, DnaK and GrpE are required for fully efficient folding. Also involved, together with DnaK and GrpE, in the DNA replication of plasmids through activation of initiation proteins. This chain is Chaperone protein DnaJ, found in Stenotrophomonas maltophilia (strain R551-3).